A 446-amino-acid chain; its full sequence is Histidine--tRNA ligase (446 aa).

The segment at 403–422 (TASVKPLRGTGDDGEKSVQQ) is disordered.

Belongs to the class-II aminoacyl-tRNA synthetase family. Homodimer.

It localises to the cytoplasm. The enzyme catalyses tRNA(His) + L-histidine + ATP = L-histidyl-tRNA(His) + AMP + diphosphate + H(+). This chain is Histidine--tRNA ligase, found in Burkholderia thailandensis (strain ATCC 700388 / DSM 13276 / CCUG 48851 / CIP 106301 / E264).